Consider the following 198-residue polypeptide: Protein GrpE (198 aa).

The interval 1-58 is disordered; it reads MTEKDQSVNNEEFAEKEDNTAKDSNTDEQIEKTASEDDVQNDSSAVDDKEKEIQQLKE. Basic and acidic residues-rich tracts occupy residues 16–35 and 46–58; these read KEDN…KTAS and VDDK…QLKE.

This sequence belongs to the GrpE family. As to quaternary structure, homodimer.

The protein resides in the cytoplasm. In terms of biological role, participates actively in the response to hyperosmotic and heat shock by preventing the aggregation of stress-denatured proteins, in association with DnaK and GrpE. It is the nucleotide exchange factor for DnaK and may function as a thermosensor. Unfolded proteins bind initially to DnaJ; upon interaction with the DnaJ-bound protein, DnaK hydrolyzes its bound ATP, resulting in the formation of a stable complex. GrpE releases ADP from DnaK; ATP binding to DnaK triggers the release of the substrate protein, thus completing the reaction cycle. Several rounds of ATP-dependent interactions between DnaJ, DnaK and GrpE are required for fully efficient folding. This chain is Protein GrpE, found in Staphylococcus carnosus (strain TM300).